A 486-amino-acid chain; its full sequence is MLFRNIEVGRQAAKLLTRTSSRLAWQSIGASRNISTIRQQIRKTQLYNFKKTVSIRPFSLSSPVFKPHVASESNPIESRLKTSKNVAYWLIGTSGLVFGIVVLGGLTRLTESGLSITEWKPVTGTLPPMNQKEWEEEFIKYKESPEFKLLNSHIDLDEFKFIFFMEWIHRLWGRAIGAVFILPAVYFAVSKKTSGHVNKRLFGLAGLLGLQGFVGWWMVKSGLDQEQLDARKSKPTVSQYRLTTHLGTAFFLYMGMLWTGLEILRECKWIKNPVQAISLFKKLDNPAIGPMRKISLALLAVSFLTAMSGGMVAGLDAGWVYNTWPKMGERWFPSSRELMDENFCRREDKKDLWWRNLLENPVTVQLVHRTCAYVAFTSVLAAHMYAIKKKAVIPRNAMTSLHVMMGVVTLQATLGILTILYLVPISLASIHQAGALALLTSSLVFASQLRKPRAPMRNVIITLPHSSKVTSGKILSEASKLASKPL.

The transit peptide at 1–33 directs the protein to the mitochondrion; sequence MLFRNIEVGRQAAKLLTRTSSRLAWQSIGASRN. Residues 34–85 are Mitochondrial matrix-facing; that stretch reads ISTIRQQIRKTQLYNFKKTVSIRPFSLSSPVFKPHVASESNPIESRLKTSKN. The chain crosses the membrane as a helical span at residues 86–106; the sequence is VAYWLIGTSGLVFGIVVLGGL. The Mitochondrial intermembrane segment spans residues 107-170; sequence TRLTESGLSI…FIFFMEWIHR (64 aa). Residue H169 coordinates heme o. Residues 171-191 traverse the membrane as a helical segment; sequence LWGRAIGAVFILPAVYFAVSK. Over 192–200 the chain is Mitochondrial matrix; the sequence is KTSGHVNKR. A helical membrane pass occupies residues 201 to 221; sequence LFGLAGLLGLQGFVGWWMVKS. The Mitochondrial intermembrane segment spans residues 222–243; sequence GLDQEQLDARKSKPTVSQYRLT. Residues 244 to 264 form a helical membrane-spanning segment; that stretch reads THLGTAFFLYMGMLWTGLEIL. H245 contributes to the heme o binding site. The Mitochondrial matrix portion of the chain corresponds to 265-293; the sequence is RECKWIKNPVQAISLFKKLDNPAIGPMRK. A helical transmembrane segment spans residues 294-314; the sequence is ISLALLAVSFLTAMSGGMVAG. Residues 315 to 364 lie on the Mitochondrial intermembrane side of the membrane; that stretch reads LDAGWVYNTWPKMGERWFPSSRELMDENFCRREDKKDLWWRNLLENPVTV. The helical transmembrane segment at 365 to 387 threads the bilayer; it reads QLVHRTCAYVAFTSVLAAHMYAI. H368 contacts heme b. Topologically, residues 388-402 are mitochondrial matrix; it reads KKKAVIPRNAMTSLH. The chain crosses the membrane as a helical span at residues 403–423; it reads VMMGVVTLQATLGILTILYLV. Position 424 (P424) is a topological domain, mitochondrial intermembrane. The chain crosses the membrane as a helical span at residues 425–445; that stretch reads ISLASIHQAGALALLTSSLVF. H431 contacts heme b. Residues 446 to 486 are Mitochondrial matrix-facing; it reads ASQLRKPRAPMRNVIITLPHSSKVTSGKILSEASKLASKPL.

This sequence belongs to the COX15/CtaA family. Type 2 subfamily. As to quaternary structure, forms 200-350 kDa oligomeric complexes independent on heme binding. In addition to form homooligomeric complexes, a portion also associates with the mitochondrial respiratory supercomplexes. Interacts with CcO assembly factors PET117, SHY1, COA3 and COA1, CcO subunit COX13 and cytochrome b-c1 subunit COR1. Requires heme b as cofactor.

The protein resides in the mitochondrion inner membrane. The catalysed reaction is Fe(II)-heme o + 2 A + H2O = Fe(II)-heme a + 2 AH2. The protein operates within porphyrin-containing compound metabolism; heme A biosynthesis; heme A from heme O: step 1/1. Functionally, catalyzes the second reaction in the biosynthesis of heme A, a prosthetic group of mitochondrial cytochrome c oxidase (CcO). Heme A is synthesized from heme B by two sequential enzymatic reactions catalyzed by heme O synthase (HOS/COX10) and heme A synthase (HAS/COX15). HAS catalyzes the conversion of heme O to heme A by two successive hydroxylations of the methyl group at C8, in a reaction that involves matrix ferredoxin YAH1 and ferredoxin reductase ARH1. The first hydroxylation forms heme I, the second hydroxylation results in an unstable dihydroxymethyl group, which spontaneously dehydrates, resulting in the formyl group of heme A. May also play a secondary role in CcO assembly. Plays a role in the maturation of COX1, the heme A-containing structural CcO subunit, possibly by interacting with the COX1-containing sub-assembly complexes that form prior to heme A insertion. May also positively regulate the upstream enzymatic reaction, farnesylation of heme B by HOS/COX10. The protein is Heme A synthase COX15 of Saccharomyces cerevisiae (strain ATCC 204508 / S288c) (Baker's yeast).